The primary structure comprises 157 residues: RxLR effector protein PITG_04049 (157 aa).

A signal peptide spans Met-1–Ser-23. Positions Gln-51–Arg-65 match the RxLR-dEER motif.

This sequence belongs to the RxLR effector family.

Its subcellular location is the secreted. The protein resides in the host cytoplasm. The protein localises to the host nucleus. Effector that might be involved in host plant infection. In Phytophthora infestans (strain T30-4) (Potato late blight agent), this protein is RxLR effector protein PITG_04049.